The following is a 187-amino-acid chain: Fibroblast growth factor 4A (187 aa).

Positions 1–22 (MTVPSALVPILLLGTAAVMVQC) are cleaved as a signal peptide.

It belongs to the heparin-binding growth factors family.

It localises to the secreted. In terms of biological role, plays an important role in the regulation of embryonic development, cell proliferation, and cell differentiation. Good candidate for an inducing factor with possible roles both in mesoderm induction at the blastula stage and in the formation of the anteroposterior axis at the gastrula stage. This chain is Fibroblast growth factor 4A (fgf4-a), found in Xenopus laevis (African clawed frog).